The chain runs to 192 residues: Ion-translocating oxidoreductase complex subunit B (192 aa).

The interval 1-26 is hydrophobic; that stretch reads MNAIWIAVAAVSLLGLAFGAILGYAS. The 4Fe-4S domain occupies 32–91; it reads EDDPVVEKIDEILPQSQCGQCGYPGCRPYAEAISCNGEKINRCAPGGEAVMLKIAELLNV. Residues Cys-49, Cys-52, Cys-57, Cys-74, Cys-117, Cys-120, Cys-123, Cys-127, Cys-147, Cys-150, Cys-153, and Cys-157 each contribute to the [4Fe-4S] cluster site. 4Fe-4S ferredoxin-type domains are found at residues 108–137 and 138–167; these read MVAV…GATR and AMHT…LQPV.

Belongs to the 4Fe4S bacterial-type ferredoxin family. RnfB subfamily. As to quaternary structure, the complex is composed of six subunits: RsxA, RsxB, RsxC, RsxD, RsxE and RsxG. [4Fe-4S] cluster serves as cofactor.

It is found in the cell inner membrane. In terms of biological role, part of a membrane-bound complex that couples electron transfer with translocation of ions across the membrane. Required to maintain the reduced state of SoxR. The protein is Ion-translocating oxidoreductase complex subunit B of Escherichia coli O8 (strain IAI1).